The following is a 304-amino-acid chain: MAVSVKRLINDFDLEVLVEGNEDIKIEVNDVNRPGLQLAGFYNYFAPERIQIIGKAEWSFLQDMQIEVRKKRVKKYLSFNITCLIISRDLEPHEEFIKEARKNNIWVLRSKSVTTKLISKITLYLADKLAPETRLHGVLVDVSGIGILITGESGIGKSETALELIKRGHRLITDDAVDIRESDGTLIGSSPKITIGMLEVRGIGIIDVTQLYGLSSVLEEKEIKLIMHFEHWKDDNDYDRLGIDNQYMDILGIPVKKLTVPVRPGRNIAVIIEAAAVNYRYSLMSKISPVDIIENRMSAVSDEA.

Active-site residues include H136 and K157. Residue 151-158 (GESGIGKS) coordinates ATP. S158 lines the Mg(2+) pocket. The active-site Proton acceptor; for phosphorylation activity. Proton donor; for dephosphorylation activity is D175. The interval 198-207 (LEVRGIGIID) is important for the catalytic mechanism of both phosphorylation and dephosphorylation. Mg(2+) is bound at residue E199. Residue R240 is part of the active site. The tract at residues 261-266 (PVRPGR) is important for the catalytic mechanism of dephosphorylation.

It belongs to the HPrK/P family. Homohexamer. It depends on Mg(2+) as a cofactor.

It catalyses the reaction [HPr protein]-L-serine + ATP = [HPr protein]-O-phospho-L-serine + ADP + H(+). It carries out the reaction [HPr protein]-O-phospho-L-serine + phosphate + H(+) = [HPr protein]-L-serine + diphosphate. Functionally, catalyzes the ATP- as well as the pyrophosphate-dependent phosphorylation of a specific serine residue in HPr, a phosphocarrier protein of the phosphoenolpyruvate-dependent sugar phosphotransferase system (PTS). HprK/P also catalyzes the pyrophosphate-producing, inorganic phosphate-dependent dephosphorylation (phosphorolysis) of seryl-phosphorylated HPr (P-Ser-HPr). The two antagonistic activities of HprK/P are regulated by several intracellular metabolites, which change their concentration in response to the absence or presence of rapidly metabolisable carbon sources (glucose, fructose, etc.) in the growth medium. Therefore, by controlling the phosphorylation state of HPr, HPrK/P is a sensor enzyme that plays a major role in the regulation of carbon metabolism and sugar transport: it mediates carbon catabolite repression (CCR), and regulates PTS-catalyzed carbohydrate uptake and inducer exclusion. This is HPr kinase/phosphorylase from Clostridium botulinum (strain Eklund 17B / Type B).